The primary structure comprises 226 residues: MKVLILRPAELLSETIRRFREEGFDAYGCPFIKLIYTDFDVPEHDFAIVTSQNAARVLRERGVRLKRVIAIGKKTAELIEAEEVLLPSKFDSETLYEEFAEMLRGKRVVAFRSNAGSEAVKRLSEVADFREIQVYRIEKLQGEEQRREVEKVREGFYDAIVFSSSMIARSLLELCDEKCLEALKNIFVVAIGPPTAKVLAEKGIRAEIPEEYTFDGVIELLKSKKM.

This sequence belongs to the uroporphyrinogen-III synthase family.

It catalyses the reaction hydroxymethylbilane = uroporphyrinogen III + H2O. Its pathway is porphyrin-containing compound metabolism; protoporphyrin-IX biosynthesis; coproporphyrinogen-III from 5-aminolevulinate: step 3/4. Catalyzes cyclization of the linear tetrapyrrole, hydroxymethylbilane, to the macrocyclic uroporphyrinogen III. The sequence is that of Putative uroporphyrinogen-III synthase from Archaeoglobus fulgidus (strain ATCC 49558 / DSM 4304 / JCM 9628 / NBRC 100126 / VC-16).